We begin with the raw amino-acid sequence, 352 residues long: D-alanine--D-alanine ligase (352 aa).

Residues 135 to 344 form the ATP-grasp domain; the sequence is KTVFAKAGLP…FPQLVDRLIE (210 aa). Residue 171–226 coordinates ATP; it reads EETLNYPCFVKPANLGSSVGIAKVRSRSELEKALDQAASYDRRIIVEAGVIAREVE. Positions 297, 311, and 313 each coordinate Mg(2+).

Belongs to the D-alanine--D-alanine ligase family. Mg(2+) is required as a cofactor. Requires Mn(2+) as cofactor.

The protein localises to the cytoplasm. The catalysed reaction is 2 D-alanine + ATP = D-alanyl-D-alanine + ADP + phosphate + H(+). Its pathway is cell wall biogenesis; peptidoglycan biosynthesis. In terms of biological role, cell wall formation. The protein is D-alanine--D-alanine ligase of Gloeothece citriformis (strain PCC 7424) (Cyanothece sp. (strain PCC 7424)).